A 287-amino-acid polypeptide reads, in one-letter code: tRNA pseudouridine synthase B (287 aa).

Catalysis depends on aspartate 38, which acts as the Nucleophile.

It belongs to the pseudouridine synthase TruB family. Type 1 subfamily.

The enzyme catalyses uridine(55) in tRNA = pseudouridine(55) in tRNA. Functionally, responsible for synthesis of pseudouridine from uracil-55 in the psi GC loop of transfer RNAs. The chain is tRNA pseudouridine synthase B from Fusobacterium nucleatum subsp. nucleatum (strain ATCC 25586 / DSM 15643 / BCRC 10681 / CIP 101130 / JCM 8532 / KCTC 2640 / LMG 13131 / VPI 4355).